A 422-amino-acid chain; its full sequence is L-2-hydroxyglutarate dehydrogenase (422 aa).

The protein belongs to the L2HGDH family. Requires FAD as cofactor.

The protein localises to the cell inner membrane. It catalyses the reaction (S)-2-hydroxyglutarate + a quinone = a quinol + 2-oxoglutarate. The protein operates within amino-acid degradation. Its function is as follows. Catalyzes the dehydrogenation of L-2-hydroxyglutarate (L2HG) to alpha-ketoglutarate and couples to the respiratory chain by feeding electrons from the reaction into the membrane quinone pool. Functions in a L-lysine degradation pathway that proceeds via cadaverine, glutarate and L-2-hydroxyglutarate. Also displays some oxidase activity in vitro on L-2-hydroxyglutarate with O2 as the electron acceptor, but this activity is most likely not physiological. This chain is L-2-hydroxyglutarate dehydrogenase, found in Salmonella houtenae.